The primary structure comprises 116 residues: UPF0499 protein ATEG_06693 (116 aa).

Residues M1–A18 form the signal peptide. Cystine bridges form between C32/C46, C36/C49, and C42/C54.

The protein belongs to the UPF0499 family.

It localises to the secreted. The sequence is that of UPF0499 protein ATEG_06693 from Aspergillus terreus (strain NIH 2624 / FGSC A1156).